Here is a 344-residue protein sequence, read N- to C-terminus: Glycerol-3-phosphate dehydrogenase [NAD(P)+] (344 aa).

NADPH is bound by residues Trp18, His38, and Lys115. The sn-glycerol 3-phosphate site is built by Lys115, Gly144, and Thr146. Ala148 provides a ligand contact to NADPH. Positions 199, 252, 262, 263, and 264 each coordinate sn-glycerol 3-phosphate. Lys199 functions as the Proton acceptor in the catalytic mechanism. Arg263 serves as a coordination point for NADPH. Val288 and Glu290 together coordinate NADPH.

This sequence belongs to the NAD-dependent glycerol-3-phosphate dehydrogenase family.

It localises to the cytoplasm. It catalyses the reaction sn-glycerol 3-phosphate + NAD(+) = dihydroxyacetone phosphate + NADH + H(+). It carries out the reaction sn-glycerol 3-phosphate + NADP(+) = dihydroxyacetone phosphate + NADPH + H(+). The protein operates within membrane lipid metabolism; glycerophospholipid metabolism. Functionally, catalyzes the reduction of the glycolytic intermediate dihydroxyacetone phosphate (DHAP) to sn-glycerol 3-phosphate (G3P), the key precursor for phospholipid synthesis. The chain is Glycerol-3-phosphate dehydrogenase [NAD(P)+] from Hydrogenovibrio crunogenus (strain DSM 25203 / XCL-2) (Thiomicrospira crunogena).